The following is a 314-amino-acid chain: Versiconal hemiacetal acetate esterase (314 aa).

Residues 85–87 (HGG) carry the Involved in the stabilization of the negatively charged intermediate by the formation of the oxyanion hole motif. Catalysis depends on residues Ser154, Asp255, and His285.

The protein belongs to the 'GDXG' lipolytic enzyme family.

It carries out the reaction (2S,3S)-versiconal hemiacetal acetate + H2O = (2S-3S)-versiconal hemiacetal + acetate + H(+). The catalysed reaction is (3S)-versiconol acetate + H2O = (S)-versiconol + acetate + H(+). It participates in mycotoxin biosynthesis; aflatoxin biosynthesis. Functionally, versiconal hemiacetal acetate esterase; part of the gene cluster that mediates the biosynthesis of aflatoxins, a group of polyketide-derived furanocoumarins, and part of the most toxic and carcinogenic compounds among the known mycotoxins. The four major aflatoxins produced by A.parasiticus are aflatoxin B1 (AFB1), aflatoxin B2 (AFB2), aflatoxin G1 (AFG1) and aflatoxin G2 (AFG2). Within the aflatoxin pathway, the versiconal hemiacetal acetate esterase aflJ converts versiconal hemiacetal acetate (VHA) into versiconal (VAL). The biosynthesis of aflatoxins begins with the norsolorinic acid synthase aflC that combines a hexanoyl starter unit produced by the fatty acid synthase aflA/aflB and 7 malonyl-CoA extender units to synthesize the precursor NOR. The second step is the conversion of NOR to averantin and requires the norsolorinic acid ketoreductase aflD, which catalyzes the dehydration of norsolorinic acid to form (1'S)-averantin. The norsolorinic acid reductases aflE and aflF may also play a role in the conversion of NOR to AVN. The cytochrome P450 monooxygenase aflG then catalyzes the hydroxylation of AVN to 5'hydroxyaverantin (HAVN). The next step is performed by the 5'-hydroxyaverantin dehydrogenase aflH that transforms HAVN to 5'-oxoaverantin (OAVN) which is further converted to averufin (AVF) by aflK that plays a dual role in the pathway, as a 5'-oxoaverantin cyclase that mediates conversion of 5'-oxoaverantin, as well as a versicolorin B synthase in a later step in the pathway. The averufin oxidase aflI catalyzes the conversion of AVF to versiconal hemiacetal acetate (VHA). VHA is then the substrate for the versiconal hemiacetal acetate esterase aflJ to yield versiconal (VAL). Versicolorin B synthase aflK then converts VAL to versicolorin B (VERB) by closing the bisfuran ring of aflatoxin which is required for DNA-binding, thus giving to aflatoxin its activity as a mutagen. Then, the activity of the versicolorin B desaturase aflL leads to versicolorin A (VERA). A branch point starts from VERB since it can also be converted to dihydrodemethylsterigmatocystin (DMDHST), probably also by aflL, VERA being a precursor for aflatoxins B1 and G1, and DMDHST for aflatoxins B2 and G2. Next, the versicolorin reductase aflM and the cytochrome P450 monooxygenase aflN are involved in conversion of VERA to demethylsterigmatocystin (DMST). AflX and aflY seem also involved in this step, through probable aflX-mediated epoxide ring-opening step following versicolorin A oxidation and aflY-mediated Baeyer-Villiger oxidation required for the formation of the xanthone ring. The methyltransferase aflO then leads to the modification of DMST to sterigmatocystin (ST), and of DMDHST to dihydrosterigmatocystin (DHST). Both ST and DHST are then substrates of the O-methyltransferase aflP to yield O-methylsterigmatocystin (OMST) and dihydro-O-methylsterigmatocystin (DHOMST), respectively. Finally OMST is converted to aflatoxins B1 and G1, and DHOMST to aflatoxins B2 and G2, via the action of several enzymes including O-methylsterigmatocystin oxidoreductase aflQ, the cytochrome P450 monooxygenase aflU, but also the NADH-dependent flavin oxidoreductase nadA which is specifically required for the synthesis of AFG1. The sequence is that of Versiconal hemiacetal acetate esterase from Aspergillus parasiticus (strain ATCC 56775 / NRRL 5862 / SRRC 143 / SU-1).